Reading from the N-terminus, the 211-residue chain is Endo-1,4-beta-xylanase 6 (211 aa).

The first 16 residues, 1 to 16, serve as a signal peptide directing secretion; the sequence is MKVTAAFAGLLVTALA. The GH11 domain occupies 19–210; sequence APEPVLVSRS…GAGSASVTIS (192 aa). The Nucleophile role is filled by Glu-106. The active-site Proton donor is the Glu-197.

This sequence belongs to the glycosyl hydrolase 11 (cellulase G) family.

The protein resides in the secreted. The catalysed reaction is Endohydrolysis of (1-&gt;4)-beta-D-xylosidic linkages in xylans.. The protein operates within glycan degradation; xylan degradation. In terms of biological role, endo-1,4-beta-xylanase involved in the hydrolysis of xylan, a major structural heterogeneous polysaccharide found in plant biomass representing the second most abundant polysaccharide in the biosphere, after cellulose. The sequence is that of Endo-1,4-beta-xylanase 6 (XYN6) from Aspergillus niger.